Reading from the N-terminus, the 210-residue chain is GRF1-interacting factor 1 (210 aa).

Over residues 135–152 (ATLQHQQLHHSQLGMSSS) the composition is skewed to low complexity. The interval 135-210 (ATLQHQQLHH…LYLKSSDDGN (76 aa)) is disordered. The segment covering 182-198 (GSGGGGEGRGGSSGDGG) has biased composition (gly residues).

The protein belongs to the SS18 family. In terms of assembly, interacts with GRF1, GRF2, GRF5 and GRF9. Strongly expressed in actively growing and developing tissues, such as roots, upper stems, and shoot tips and flower buds. Also expressed in mature flowers. Not expressed in the shoot apical meristem (SAM). Highly accumulated in the proximal part of leaf primordia, in the key proliferative zone at the junction region between the leaf blade and leaf petiole.

Transcription coactivator that plays a role in the regulation of cell expansion in leaf and cotyledons tissues. Component of a network formed by miR396, the GRFs and their interacting factors (GIFs) acting in the regulation of meristem function, at least partially through the control of cell proliferation. Appears to function synergistically with GRF1 as a transcriptional coactivator. Acts together with GRF5 for the development of appropriate leaf size and shape through the promotion and/or maintenance of cell proliferation activity in leaf primordia. Plays a role in adaxial/abaxial patterning and growth in leaf morphogenesis. GIFs are involved in the positive regulation of cell proliferation of lateral organs in a functionally redundant manner. Together with GATA18/HAN, mediates cotyledon identity by preventing ectopic root formation through the repression of PLT1 expression. This Arabidopsis thaliana (Mouse-ear cress) protein is GRF1-interacting factor 1.